Here is a 502-residue protein sequence, read N- to C-terminus: Glycerol kinase (502 aa).

Thr14 is an ADP binding site. ATP is bound by residues Thr14, Thr15, and Ser16. Thr14 serves as a coordination point for sn-glycerol 3-phosphate. Arg18 contributes to the ADP binding site. The sn-glycerol 3-phosphate site is built by Arg84, Glu85, and Tyr136. Glycerol contacts are provided by Arg84, Glu85, and Tyr136. Phosphohistidine; by HPr is present on His232. Asp246 contacts sn-glycerol 3-phosphate. The glycerol site is built by Asp246 and Gln247. Thr268 and Gly311 together coordinate ADP. The ATP site is built by Thr268, Gly311, Gln315, and Gly412. Gly412 and Asn416 together coordinate ADP.

Belongs to the FGGY kinase family. Homotetramer and homodimer (in equilibrium). The phosphoenolpyruvate-dependent sugar phosphotransferase system (PTS), including enzyme I, and histidine-containing protein (HPr) are required for the phosphorylation, which leads to the activation of the enzyme.

It catalyses the reaction glycerol + ATP = sn-glycerol 3-phosphate + ADP + H(+). The protein operates within polyol metabolism; glycerol degradation via glycerol kinase pathway; sn-glycerol 3-phosphate from glycerol: step 1/1. Activated by phosphorylation and inhibited by fructose 1,6-bisphosphate (FBP). Key enzyme in the regulation of glycerol uptake and metabolism. Catalyzes the phosphorylation of glycerol to yield sn-glycerol 3-phosphate. The polypeptide is Glycerol kinase (Streptococcus pneumoniae serotype 2 (strain D39 / NCTC 7466)).